The following is a 347-amino-acid chain: Haptoglobin (347 aa).

A signal peptide spans 1–18 (MRALGAVVTLLLWGQLFA). Positions 31 to 88 (DSCPKPPEIANGYVEHLVRYRCRQFYRLRAEGDGVYTLNDEKQWVNTVAGEKLPECEA) constitute a Sushi domain. Disulfide bonds link Cys52-Cys86, Cys90-Cys207, Cys250-Cys281, and Cys292-Cys322. The Peptidase S1 domain maps to 103 to 345 (IIGGSMDAKG…LKDWVQETMA (243 aa)). Asn148, Asn182, Asn256, and Asn264 each carry an N-linked (GlcNAc...) asparagine glycan. The interval 259 to 264 (VPEKKN) is interaction with CD163.

The protein belongs to the peptidase S1 family. Tetramer of two alpha and two beta chains; disulfide-linked. The hemoglobin/haptoglobin complex is composed of a haptoglobin dimer bound to two hemoglobin alpha-beta dimers. Interacts with CD163. Interacts with ERGIC3. In terms of tissue distribution, expressed by the liver and secreted in plasma.

It is found in the secreted. As a result of hemolysis, hemoglobin is found to accumulate in the kidney and is secreted in the urine. Haptoglobin captures, and combines with free plasma hemoglobin to allow hepatic recycling of heme iron and to prevent kidney damage. Haptoglobin also acts as an antioxidant, has antibacterial activity and plays a role in modulating many aspects of the acute phase response. Hemoglobin/haptoglobin complexes are rapidly cleared by the macrophage CD163 scavenger receptor expressed on the surface of liver Kupfer cells through an endocytic lysosomal degradation pathway. This Mus musculus (Mouse) protein is Haptoglobin (Hp).